Reading from the N-terminus, the 152-residue chain is Large ribosomal subunit protein bL9 (152 aa).

It belongs to the bacterial ribosomal protein bL9 family.

In terms of biological role, binds to the 23S rRNA. The sequence is that of Large ribosomal subunit protein bL9 from Prochlorococcus marinus (strain MIT 9313).